Reading from the N-terminus, the 115-residue chain is Large ribosomal subunit protein bL20 (115 aa).

Belongs to the bacterial ribosomal protein bL20 family.

Its function is as follows. Binds directly to 23S ribosomal RNA and is necessary for the in vitro assembly process of the 50S ribosomal subunit. It is not involved in the protein synthesizing functions of that subunit. The chain is Large ribosomal subunit protein bL20 from Chlorobium limicola (strain DSM 245 / NBRC 103803 / 6330).